Consider the following 506-residue polypeptide: Cysteine--tRNA ligase (506 aa).

C34 is a Zn(2+) binding site. The 'HIGH' region signature appears at 36 to 46 (PTVYDFAHIGN). Positions 230, 269, and 273 each coordinate Zn(2+). The 'KMSKS' region motif lies at 302-306 (KMSKS). An ATP-binding site is contributed by K305.

It belongs to the class-I aminoacyl-tRNA synthetase family. Monomer. It depends on Zn(2+) as a cofactor.

It localises to the cytoplasm. The catalysed reaction is tRNA(Cys) + L-cysteine + ATP = L-cysteinyl-tRNA(Cys) + AMP + diphosphate. The sequence is that of Cysteine--tRNA ligase from Brucella melitensis biotype 2 (strain ATCC 23457).